A 405-amino-acid polypeptide reads, in one-letter code: Octaketide synthase 3 (405 aa).

The segment covering 1-10 has biased composition (polar residues); the sequence is MGSIAESSPL. The tract at residues 1 to 22 is disordered; the sequence is MGSIAESSPLMSRENVEGIRKA. Cys176 is an active-site residue. CoA is bound by residues Ser283 and 320 to 323; that span reads GGRA.

The protein belongs to the thiolase-like superfamily. Chalcone/stilbene synthases family. Homodimer.

It functions in the pathway secondary metabolite biosynthesis; flavonoid biosynthesis. Catalyzes the iterative condensations of 8 molecules of malonyl-CoA to produce aromatic octaketides, SEK4 and SEK4b, the products of the minimal polyketide synthase for the benzoisochromanequinone actinorhodin. May be involved in the biosynthesis of the octaketide barbaloin. The sequence is that of Octaketide synthase 3 (PKS5) from Aloe arborescens (Kidachi aloe).